The following is a 94-amino-acid chain: Cell division protein FtsB (94 aa).

Residues 1–3 lie on the Cytoplasmic side of the membrane; sequence MRV. A helical membrane pass occupies residues 4–21; the sequence is FALTLSLLLVWLLYTLMW. The Periplasmic segment spans residues 22–94; sequence GKNGVMDFRA…YRIIGEESRQ (73 aa). Residues 33-76 are a coiled coil; it reads QAEIEVQQQVNANLHLRNQEMFAEIDDLRQGLDAIEERARNELG.

The protein belongs to the FtsB family. Part of a complex composed of FtsB, FtsL and FtsQ.

The protein resides in the cell inner membrane. Its function is as follows. Essential cell division protein. May link together the upstream cell division proteins, which are predominantly cytoplasmic, with the downstream cell division proteins, which are predominantly periplasmic. The polypeptide is Cell division protein FtsB (Vibrio cholerae serotype O1 (strain ATCC 39315 / El Tor Inaba N16961)).